The primary structure comprises 131 residues: Large ribosomal subunit protein uL18 (131 aa).

Belongs to the universal ribosomal protein uL18 family. In terms of assembly, part of the 50S ribosomal subunit; part of the 5S rRNA/L5/L18/L25 subcomplex. Contacts the 5S and 23S rRNAs.

Functionally, this is one of the proteins that bind and probably mediate the attachment of the 5S RNA into the large ribosomal subunit, where it forms part of the central protuberance. This Corynebacterium kroppenstedtii (strain DSM 44385 / JCM 11950 / CIP 105744 / CCUG 35717) protein is Large ribosomal subunit protein uL18.